The primary structure comprises 318 residues: Dihydroorotate dehydrogenase B (NAD(+)), catalytic subunit (318 aa).

FMN contacts are provided by residues S19 and 43–44; that span reads KT. Substrate is bound by residues K43, 69-73, and N125; that span reads NAMGL. Residue N125 coordinates FMN. C128 serves as the catalytic Nucleophile. The FMN site is built by K164 and V192. 193 to 194 provides a ligand contact to substrate; sequence NT. Residues G219, 247-248, and 269-270 each bind FMN; these read GG and AT.

The protein belongs to the dihydroorotate dehydrogenase family. Type 1 subfamily. As to quaternary structure, heterotetramer of 2 PyrK and 2 PyrD type B subunits. It depends on FMN as a cofactor.

It localises to the cytoplasm. The catalysed reaction is (S)-dihydroorotate + NAD(+) = orotate + NADH + H(+). It participates in pyrimidine metabolism; UMP biosynthesis via de novo pathway; orotate from (S)-dihydroorotate (NAD(+) route): step 1/1. In terms of biological role, catalyzes the conversion of dihydroorotate to orotate with NAD(+) as electron acceptor. This is Dihydroorotate dehydrogenase B (NAD(+)), catalytic subunit (pyrD) from Methanopyrus kandleri (strain AV19 / DSM 6324 / JCM 9639 / NBRC 100938).